The sequence spans 173 residues: Calcineurin subunit B (173 aa).

4 EF-hand domains span residues 20–55 (DEIDRLRKRFMKLDTDASGILETNEFLSLPGVAANP), 59–87 (RLMDVFDENHSGDVDFQEFINGLSTFSTK), 89–124 (NKKEKLRFAFKVYDIDRDGYISNGELFIVLKMMVGN), and 130–165 (QLQQIVDKTIMEADKDGDGKISFEEFEAQVGGTNVY). Residues aspartate 33, aspartate 35, serine 37, glutamate 44, aspartate 65, asparagine 67, serine 69, aspartate 71, glutamate 76, aspartate 102, aspartate 104, aspartate 106, tyrosine 108, glutamate 113, aspartate 143, aspartate 145, aspartate 147, lysine 149, and glutamate 154 each contribute to the Ca(2+) site.

Belongs to the calcineurin regulatory subunit family. As to quaternary structure, composed of a catalytic subunit (A) and a regulatory subunit (B).

Its function is as follows. Regulatory subunit of calcineurin, a calcium-dependent, calmodulin stimulated protein phosphatase. Confers calcium sensitivity. In Yarrowia lipolytica (strain CLIB 122 / E 150) (Yeast), this protein is Calcineurin subunit B (CNB1).